The following is a 513-amino-acid chain: Xylose import ATP-binding protein XylG (513 aa).

ABC transporter domains are found at residues 5–242 (LEMK…VGRE) and 259–505 (LRVE…LRSE). Residue 37–44 (GENGSGKS) participates in ATP binding.

The protein belongs to the ABC transporter superfamily. Xylose importer (TC 3.A.1.2.4) family. The complex is composed of two ATP-binding proteins (XylG), two transmembrane proteins (XylH) and a solute-binding protein (XylF).

The protein localises to the cell inner membrane. The enzyme catalyses D-xylose(out) + ATP + H2O = D-xylose(in) + ADP + phosphate + H(+). In terms of biological role, part of the ABC transporter complex XylFGH involved in xylose import. Responsible for energy coupling to the transport system. This chain is Xylose import ATP-binding protein XylG, found in Pectobacterium atrosepticum (strain SCRI 1043 / ATCC BAA-672) (Erwinia carotovora subsp. atroseptica).